Here is a 943-residue protein sequence, read N- to C-terminus: Serine/threonine-protein kinase ATG1 (943 aa).

Residues 22 to 327 (FVIDKEIGKG…FEDFFHHPVI (306 aa)) form the Protein kinase domain. ATP-binding positions include 28-36 (IGKGSFAQV) and lysine 51. The active-site Proton acceptor is aspartate 165. Disordered stretches follow at residues 334 to 468 (LVED…LTDE), 503 to 561 (QQGQ…SPGA), 774 to 800 (LPEE…GGQA), 858 to 888 (HLPK…SDDK), and 914 to 943 (AASK…SVPT). The segment covering 338–352 (DIPKPEKPVLAETKS) has biased composition (basic and acidic residues). Residues 517-529 (ATQQGHPTSTTGA) show a composition bias toward polar residues. Basic and acidic residues predominate over residues 542–554 (RNDHYRKASHDKT). Positions 919 to 928 (QQQQQQQQVV) are enriched in low complexity.

Belongs to the protein kinase superfamily. Ser/Thr protein kinase family. APG1/unc-51/ULK1 subfamily. As to quaternary structure, homodimer. Forms a ternary complex with ATG13 and ATG17.

It is found in the cytoplasm. It localises to the preautophagosomal structure membrane. It catalyses the reaction L-seryl-[protein] + ATP = O-phospho-L-seryl-[protein] + ADP + H(+). It carries out the reaction L-threonyl-[protein] + ATP = O-phospho-L-threonyl-[protein] + ADP + H(+). Serine/threonine protein kinase involved in the cytoplasm to vacuole transport (Cvt) and found to be essential in autophagy, where it is required for the formation of autophagosomes. Involved in the clearance of protein aggregates which cannot be efficiently cleared by the proteasome. Required for selective autophagic degradation of the nucleus (nucleophagy) as well as for mitophagy which contributes to regulate mitochondrial quantity and quality by eliminating the mitochondria to a basal level to fulfill cellular energy requirements and preventing excess ROS production. Also involved in endoplasmic reticulum-specific autophagic process, in selective removal of ER-associated degradation (ERAD) substrates. Plays a key role in ATG9 and ATG23 cycling through the pre-autophagosomal structure and is necessary to promote ATG18 binding to ATG9 through phosphorylation of ATG9. Catalyzes phosphorylation of ATG4, decreasing the interaction between ATG4 and ATG8 and impairing deconjugation of PE-conjugated forms of ATG8. The polypeptide is Serine/threonine-protein kinase ATG1 (Chaetomium globosum (strain ATCC 6205 / CBS 148.51 / DSM 1962 / NBRC 6347 / NRRL 1970) (Soil fungus)).